The following is a 209-amino-acid chain: Urease accessory protein UreG (209 aa).

10–17 (GPVGSGKT) contacts GTP.

The protein belongs to the SIMIBI class G3E GTPase family. UreG subfamily. Homodimer. UreD, UreF and UreG form a complex that acts as a GTP-hydrolysis-dependent molecular chaperone, activating the urease apoprotein by helping to assemble the nickel containing metallocenter of UreC. The UreE protein probably delivers the nickel.

The protein localises to the cytoplasm. Its function is as follows. Facilitates the functional incorporation of the urease nickel metallocenter. This process requires GTP hydrolysis, probably effectuated by UreG. This chain is Urease accessory protein UreG, found in Lysinibacillus sphaericus (strain C3-41).